The primary structure comprises 399 residues: CCA-adding enzyme (399 aa).

The ATP site is built by G33 and R36. CTP-binding residues include G33 and R36. Mg(2+) is bound by residues D46 and D48. Residues R117, D160, R163, R166, and R169 each contribute to the ATP site. CTP contacts are provided by R117, D160, R163, R166, and R169.

This sequence belongs to the tRNA nucleotidyltransferase/poly(A) polymerase family. Bacterial CCA-adding enzyme type 3 subfamily. Homodimer. Mg(2+) serves as cofactor.

It catalyses the reaction a tRNA precursor + 2 CTP + ATP = a tRNA with a 3' CCA end + 3 diphosphate. The enzyme catalyses a tRNA with a 3' CCA end + 2 CTP + ATP = a tRNA with a 3' CCACCA end + 3 diphosphate. Catalyzes the addition and repair of the essential 3'-terminal CCA sequence in tRNAs without using a nucleic acid template. Adds these three nucleotides in the order of C, C, and A to the tRNA nucleotide-73, using CTP and ATP as substrates and producing inorganic pyrophosphate. tRNA 3'-terminal CCA addition is required both for tRNA processing and repair. Also involved in tRNA surveillance by mediating tandem CCA addition to generate a CCACCA at the 3' terminus of unstable tRNAs. While stable tRNAs receive only 3'-terminal CCA, unstable tRNAs are marked with CCACCA and rapidly degraded. The protein is CCA-adding enzyme of Lactobacillus helveticus (strain DPC 4571).